Reading from the N-terminus, the 237-residue chain is Ribonuclease PH (237 aa).

Residues arginine 86 and 124–126 (GTR) contribute to the phosphate site.

The protein belongs to the RNase PH family. As to quaternary structure, homohexameric ring arranged as a trimer of dimers.

It catalyses the reaction tRNA(n+1) + phosphate = tRNA(n) + a ribonucleoside 5'-diphosphate. Phosphorolytic 3'-5' exoribonuclease that plays an important role in tRNA 3'-end maturation. Removes nucleotide residues following the 3'-CCA terminus of tRNAs; can also add nucleotides to the ends of RNA molecules by using nucleoside diphosphates as substrates, but this may not be physiologically important. Probably plays a role in initiation of 16S rRNA degradation (leading to ribosome degradation) during starvation. The chain is Ribonuclease PH from Shewanella denitrificans (strain OS217 / ATCC BAA-1090 / DSM 15013).